We begin with the raw amino-acid sequence, 490 residues long: Chromosomal replication initiator protein DnaA (490 aa).

The tract at residues 1-91 (MTMKGGVASQ…GELWAAHDAT (91 aa)) is domain I, interacts with DnaA modulators. Residues 91 to 147 (TGRRIDLKSRLEFEAAAGAYVEATPKAVAAEPIEIVLPVSTDAPTVVAPSAKSPRTQ) are domain II. The tract at residues 148 to 370 (GLQERFTFET…GALNTLSARA (223 aa)) is domain III, AAA+ region. 4 residues coordinate ATP: Gly192, Gly194, Lys195, and Thr196. The segment at 371-490 (GEGLSRMTLD…LETLTRKLRG (120 aa)) is domain IV, binds dsDNA.

It belongs to the DnaA family. As to quaternary structure, oligomerizes as a right-handed, spiral filament on DNA at oriC.

It is found in the cytoplasm. Its function is as follows. Plays an essential role in the initiation and regulation of chromosomal replication. ATP-DnaA binds to the origin of replication (oriC) to initiate formation of the DNA replication initiation complex once per cell cycle. Binds the DnaA box (a 9 base pair repeat at the origin) and separates the double-stranded (ds)DNA. Forms a right-handed helical filament on oriC DNA; dsDNA binds to the exterior of the filament while single-stranded (ss)DNA is stabiized in the filament's interior. The ATP-DnaA-oriC complex binds and stabilizes one strand of the AT-rich DNA unwinding element (DUE), permitting loading of DNA polymerase. After initiation quickly degrades to an ADP-DnaA complex that is not apt for DNA replication. Binds acidic phospholipids. The sequence is that of Chromosomal replication initiator protein DnaA from Caulobacter vibrioides (strain ATCC 19089 / CIP 103742 / CB 15) (Caulobacter crescentus).